A 97-amino-acid chain; its full sequence is Large ribosomal subunit protein eL21 (97 aa).

It belongs to the eukaryotic ribosomal protein eL21 family.

In Methanospirillum hungatei JF-1 (strain ATCC 27890 / DSM 864 / NBRC 100397 / JF-1), this protein is Large ribosomal subunit protein eL21.